The primary structure comprises 843 residues: Beta-mannosidase B (843 aa).

Catalysis depends on Glu-430, which acts as the Proton donor. Asn-721 carries N-linked (GlcNAc...) asparagine glycosylation.

It belongs to the glycosyl hydrolase 2 family. Beta-mannosidase B subfamily.

It carries out the reaction Hydrolysis of terminal, non-reducing beta-D-mannose residues in beta-D-mannosides.. It participates in glycan metabolism; N-glycan degradation. Exoglycosidase that cleaves the single beta-linked mannose residue from the non-reducing end of beta-mannosidic oligosaccharides of various complexity and length. Prefers mannobiose over mannotriose and has no activity against polymeric mannan. Is also severely restricted by galactosyl substitutions at the +1 subsite. In Aspergillus terreus (strain NIH 2624 / FGSC A1156), this protein is Beta-mannosidase B (mndB).